The primary structure comprises 765 residues: Ubiquitin-like modifier-activating enzyme atg7 (765 aa).

A GXGXXG motif motif is present at residues 436–441; the sequence is GAGTLG. The active-site Glycyl thioester intermediate is cysteine 616. 2 disordered regions span residues 646–670 and 744–765; these read AAPA…PPNH and AAND…PELL. Residues 721 to 760 are homodimerization; the sequence is ALTEKDYITELSGLAEVQRKAEAAANDVEWDSDEEGMEDE. Residues 748 to 765 are compositionally biased toward acidic residues; that stretch reads VEWDSDEEGMEDEEPELL.

It belongs to the ATG7 family. In terms of assembly, homodimer. Interacts with ATG8 through a thioester bond between Cys-616 and the C-terminal Gly of ATG8 and with ATG12 through a thioester bond between Cys-616 and the C-terminal Gly of ATG12. Also interacts with ATG3.

Its subcellular location is the cytoplasm. It localises to the preautophagosomal structure. Its function is as follows. E1-like activating enzyme involved in the 2 ubiquitin-like systems required for cytoplasm to vacuole transport (Cvt) and autophagy. Activates ATG12 for its conjugation with ATG5 and ATG8 for its conjugation with phosphatidylethanolamine. Both systems are needed for the ATG8 association to Cvt vesicles and autophagosomes membranes. Autophagy is essential for maintenance of amino acid levels and protein synthesis under nitrogen starvation. Required for selective autophagic degradation of the nucleus (nucleophagy) as well as for mitophagy which contributes to regulate mitochondrial quantity and quality by eliminating the mitochondria to a basal level to fulfill cellular energy requirements and preventing excess ROS production. Required for normal mycelial growth and conidiogenesis, and regulates sclerotial formation. Plays an essential role in pathogenesis. In Botryotinia fuckeliana (strain BcDW1) (Noble rot fungus), this protein is Ubiquitin-like modifier-activating enzyme atg7.